A 326-amino-acid chain; its full sequence is Negative regulator of the PHO system (326 aa).

Residues 8-290 (FQQLEKLGEG…ARQALQHPWF (283 aa)) enclose the Protein kinase domain. ATP-binding positions include 14 to 22 (LGEGTYATV) and Lys37. Catalysis depends on Asp131, which acts as the Proton acceptor. Residues 300-326 (PQHLSDPYQQQQQQQQHPHQPIIDQQY) are disordered. Over residues 305–326 (DPYQQQQQQQQHPHQPIIDQQY) the composition is skewed to low complexity.

This sequence belongs to the protein kinase superfamily. CMGC Ser/Thr protein kinase family. CDC2/CDKX subfamily. As to quaternary structure, interacts with a number of cyclins.

The catalysed reaction is L-seryl-[protein] + ATP = O-phospho-L-seryl-[protein] + ADP + H(+). The enzyme catalyses L-threonyl-[protein] + ATP = O-phospho-L-threonyl-[protein] + ADP + H(+). In terms of biological role, when phosphate concentrations are high it phosphorylates the PHO4 transcription factor thus establishing repression. This chain is Negative regulator of the PHO system (PHO85), found in Candida albicans (Yeast).